The sequence spans 111 residues: MNTIQNIQQLREFLTVYNTLSERCFNACARDYTTSTLTKDEGSCVSQCIDKQMLVNRRFMLVFAEQAPKALFKQGEQSPTEAIKSAKPEPAVPAPEATPVETTPVIEENKQ.

Positions 24–48 (CFNACARDYTTSTLTKDEGSCVSQC) match the Twin CX3C motif motif. Disulfide bonds link Cys-24–Cys-48 and Cys-28–Cys-44. Residues 73–111 (KQGEQSPTEAIKSAKPEPAVPAPEATPVETTPVIEENKQ) are disordered. The span at 94 to 105 (APEATPVETTPV) shows a compositional bias: low complexity.

The protein belongs to the small Tim family. As to quaternary structure, component of the TIM22 complex, whose core is composed of tim-22, associated with peripheral protein tin-9.2/tim-10b and the 70 kDa heterohexamer. In most cases, the 70 kDa complex is composed of TIMM9 and TIMM10.

It localises to the mitochondrion inner membrane. In terms of biological role, component of the TIM22 complex, a complex that mediates the import and insertion of multi-pass transmembrane proteins into the mitochondrial inner membrane. The TIM22 complex forms a twin-pore translocase that uses the membrane potential as the external driving force. In the TIM22 complex, it may act as a docking point for the soluble 70 kDa complex that guides the target proteins in transit through the aqueous mitochondrial intermembrane space. The protein is Mitochondrial import inner membrane translocase subunit Tim10B (tin-9.2) of Caenorhabditis elegans.